Here is a 406-residue protein sequence, read N- to C-terminus: Phosphorylase b kinase gamma catalytic chain, liver/testis isoform (406 aa).

The region spanning 24-291 (YDPKDVIGRG…AEQALQHPFF (268 aa)) is the Protein kinase domain. ATP-binding positions include 30 to 38 (IGRGVSSVV) and Lys-53. Asp-153 (proton acceptor) is an active-site residue. The tract at residues 306-330 (QRFRVAVWTVLAAGRVALSAHRIRP) is calmodulin-binding (domain-N). Residues 346–370 (VRRLIDNCAFRLYGHWVKKGEQQNR) are calmodulin-binding (domain-C).

Belongs to the protein kinase superfamily. CAMK Ser/Thr protein kinase family. As to quaternary structure, hexadecamer of 4 heterotetramers, each composed of alpha, beta, gamma, and delta subunits. Alpha (PHKA1 or PHKA2) and beta (PHKB) are regulatory subunits, gamma (PHKG1 or PHKG2) is the catalytic subunit, and delta is calmodulin.

It catalyses the reaction 2 ATP + phosphorylase b = 2 ADP + phosphorylase a.. Functionally, catalytic subunit of the phosphorylase b kinase (PHK), which mediates the neural and hormonal regulation of glycogen breakdown (glycogenolysis) by phosphorylating and thereby activating glycogen phosphorylase. May regulate glycogeneolysis in the testis. In vitro, phosphorylates PYGM. The sequence is that of Phosphorylase b kinase gamma catalytic chain, liver/testis isoform (PHKG2) from Bos taurus (Bovine).